We begin with the raw amino-acid sequence, 379 residues long: UDP-N-acetylglucosamine--N-acetylmuramyl-(pentapeptide) pyrophosphoryl-undecaprenol N-acetylglucosamine transferase (379 aa).

UDP-N-acetyl-alpha-D-glucosamine contacts are provided by residues 10–12 (TGG), Asn124, and Arg165. Residues 174 to 195 (TRDQGPGIRDQEKHMTDSTGPA) are disordered. Residues Ser211, Ile266, and Gln311 each contribute to the UDP-N-acetyl-alpha-D-glucosamine site.

Belongs to the glycosyltransferase 28 family. MurG subfamily.

The protein resides in the cell inner membrane. It carries out the reaction di-trans,octa-cis-undecaprenyl diphospho-N-acetyl-alpha-D-muramoyl-L-alanyl-D-glutamyl-meso-2,6-diaminopimeloyl-D-alanyl-D-alanine + UDP-N-acetyl-alpha-D-glucosamine = di-trans,octa-cis-undecaprenyl diphospho-[N-acetyl-alpha-D-glucosaminyl-(1-&gt;4)]-N-acetyl-alpha-D-muramoyl-L-alanyl-D-glutamyl-meso-2,6-diaminopimeloyl-D-alanyl-D-alanine + UDP + H(+). It functions in the pathway cell wall biogenesis; peptidoglycan biosynthesis. Functionally, cell wall formation. Catalyzes the transfer of a GlcNAc subunit on undecaprenyl-pyrophosphoryl-MurNAc-pentapeptide (lipid intermediate I) to form undecaprenyl-pyrophosphoryl-MurNAc-(pentapeptide)GlcNAc (lipid intermediate II). In Pelobacter propionicus (strain DSM 2379 / NBRC 103807 / OttBd1), this protein is UDP-N-acetylglucosamine--N-acetylmuramyl-(pentapeptide) pyrophosphoryl-undecaprenol N-acetylglucosamine transferase.